A 3685-amino-acid polypeptide reads, in one-letter code: Dystrophin (3685 aa).

The interval 1 to 240 (MLWWEEVEDC…YITSLFQVLP (240 aa)) is actin-binding. 2 consecutive Calponin-homology (CH) domains span residues 15-119 (DVQK…LHWQ) and 134-240 (TNSE…QVLP). The interval 63-72 (PKEKGSTRVH) is ANK2- and ANK-3 binding. 24 Spectrin repeats span residues 339–447 (VNLD…NLHR), 448–556 (VLMD…LLQD), 559–667 (LKWQ…QISQ), 719–828 (EIRK…WLEY), 830–934 (NNII…ELQT), 943–1045 (RYQE…KLEE), 1048–1154 (NKLR…ALKG), 1157–1263 (EKTV…TLEE), 1266–1367 (ACWH…LLEQ), 1368–1463 (SIQS…LFQK), 1468–1568 (EQRL…QLEK), 1571–1676 (KLSR…LLLE), 1679–1778 (KHME…KASI), 1779–1874 (PLKE…KALE), 1877–1979 (HQWY…TVRE), 1992–2101 (EISY…RFDR), 2104–2208 (EKWR…RLEE), 2211–2318 (NILS…EIEA), 2319–2423 (QIKD…LRAK), 2475–2577 (FNRA…QLNE), 2580–2686 (KDST…ALEE), 2689–2802 (RLLQ…HLEA), 2808–2930 (KRLH…RKID), and 2935–3040 (RLRE…QLHE). At N340 the chain carries Phosphothreonine. 2 positions are modified to phosphoserine: Y344 and L348. Phosphothreonine is present on residues E519, S616, and S629. The interaction with SYNM stretch occupies residues 1415-1913 (SDLTSHEISL…PEPRDERKIK (499 aa)). Residues 3055 to 3088 (TSVQGPWERAISPNKVPYYINHETQTTCWDHPKM) form the WW domain. Positions 3058-3408 (QGPWERAISP…TVLEGDNMET (351 aa)) are interaction with SYNM. The segment at 3308–3364 (KHQAKCNICKECPIIGFRYRSLKHFNYDICQSCFFSGRVAKGHKMHYPMVEYCTPTT) adopts a ZZ-type; degenerate zinc-finger fold. The Zn(2+) site is built by C3313, C3316, C3337, and C3340. The tract at residues 3466-3518 (DDEHLLIQHYCQSLNQDSPLSQPRSPAQILISLESEERGELERILADLEEENR) is binds to SNTB1. S3483, S3490, and S3500 each carry phosphoserine. Disordered stretches follow at residues 3528–3554 (KQQH…QSPR) and 3603–3685 (EAKV…EDTM). Polar residues-rich tracts occupy residues 3607 to 3626 (NGTT…SSQP) and 3662 to 3673 (QLNNSFPSSRGR). Phosphoserine occurs at positions 3612, 3613, 3617, 3623, 3624, and 3666.

Interacts with SYNM. Interacts with the syntrophins SNTA1, SNTB1, SNTB2, SNTG1 and SNTG2. Interacts with KRT19. Component of the dystrophin-associated glycoprotein complex which is composed of three subcomplexes: a cytoplasmic complex comprised of DMD (or UTRN), DTNA and a number of syntrophins, such as SNTB1, SNTB2, SNTG1 and SNTG2, the transmembrane dystroglycan complex, and the sarcoglycan-sarcospan complex. Interacts with DAG1 (betaDAG1) with DMD; the interaction is inhibited by phosphorylation on the PPXY motif of DAG1. Interacts with CMYA5. Directly interacts with ANK2 and ANK3; these interactions do not interfere with betaDAG1-binding and are necessary for proper localization in muscle cells. Identified in a dystroglycan complex that contains at least PRX, DRP2, UTRN, DMD and DAG1. Interacts with DTNB. Interacts with PGM5; the interaction is direct. Interacts with NOS1; localizes NOS1 to sarcolemma in muscle cells. As to expression, expressed in muscle fibers accumulating in the costameres of myoplasm at the sarcolemma. Expressed in brain, muscle, kidney, lung and testis. Most tissues contain transcripts of multiple isoforms. Isoform 15: Only isoform to be detected in heart and liver and is also expressed in brain, testis and hepatoma cells.

It localises to the cell membrane. Its subcellular location is the sarcolemma. The protein resides in the cytoplasm. The protein localises to the cytoskeleton. It is found in the postsynaptic cell membrane. Its function is as follows. Anchors the extracellular matrix to the cytoskeleton via F-actin. Ligand for dystroglycan. Component of the dystrophin-associated glycoprotein complex which accumulates at the neuromuscular junction (NMJ) and at a variety of synapses in the peripheral and central nervous systems and has a structural function in stabilizing the sarcolemma. Also implicated in signaling events and synaptic transmission. In Homo sapiens (Human), this protein is Dystrophin.